The sequence spans 149 residues: D-aminoacyl-tRNA deacylase (149 aa).

Residues 137–138 carry the Gly-cisPro motif, important for rejection of L-amino acids motif; it reads GP.

This sequence belongs to the DTD family. As to quaternary structure, homodimer.

It is found in the cytoplasm. It carries out the reaction glycyl-tRNA(Ala) + H2O = tRNA(Ala) + glycine + H(+). The catalysed reaction is a D-aminoacyl-tRNA + H2O = a tRNA + a D-alpha-amino acid + H(+). Functionally, an aminoacyl-tRNA editing enzyme that deacylates mischarged D-aminoacyl-tRNAs. Also deacylates mischarged glycyl-tRNA(Ala), protecting cells against glycine mischarging by AlaRS. Acts via tRNA-based rather than protein-based catalysis; rejects L-amino acids rather than detecting D-amino acids in the active site. By recycling D-aminoacyl-tRNA to D-amino acids and free tRNA molecules, this enzyme counteracts the toxicity associated with the formation of D-aminoacyl-tRNA entities in vivo and helps enforce protein L-homochirality. The polypeptide is D-aminoacyl-tRNA deacylase (Desulforudis audaxviator (strain MP104C)).